A 367-amino-acid polypeptide reads, in one-letter code: Chorismate synthase (367 aa).

A disordered region spans residues 39 to 60 (EEFSHDLQRRASGKSRHTSARR). Arginine 48 and arginine 54 together coordinate NADP(+). FMN contacts are provided by residues 125-127 (RSS), 238-239 (NA), glycine 278, 293-297 (KPTSS), and arginine 319.

Belongs to the chorismate synthase family. Homotetramer. FMNH2 is required as a cofactor.

It carries out the reaction 5-O-(1-carboxyvinyl)-3-phosphoshikimate = chorismate + phosphate. The protein operates within metabolic intermediate biosynthesis; chorismate biosynthesis; chorismate from D-erythrose 4-phosphate and phosphoenolpyruvate: step 7/7. Catalyzes the anti-1,4-elimination of the C-3 phosphate and the C-6 proR hydrogen from 5-enolpyruvylshikimate-3-phosphate (EPSP) to yield chorismate, which is the branch point compound that serves as the starting substrate for the three terminal pathways of aromatic amino acid biosynthesis. This reaction introduces a second double bond into the aromatic ring system. This chain is Chorismate synthase, found in Xanthomonas oryzae pv. oryzae (strain MAFF 311018).